Here is a 404-residue protein sequence, read N- to C-terminus: S-adenosylmethionine synthase (404 aa).

139–144 is an ATP binding site; the sequence is GKGSTD.

Belongs to the AdoMet synthase 2 family. Mg(2+) serves as cofactor.

It catalyses the reaction L-methionine + ATP + H2O = S-adenosyl-L-methionine + phosphate + diphosphate. The protein operates within amino-acid biosynthesis; S-adenosyl-L-methionine biosynthesis; S-adenosyl-L-methionine from L-methionine: step 1/1. Catalyzes the formation of S-adenosylmethionine from methionine and ATP. This is S-adenosylmethionine synthase from Saccharolobus islandicus (strain L.S.2.15 / Lassen #1) (Sulfolobus islandicus).